We begin with the raw amino-acid sequence, 78 residues long: Large ribosomal subunit protein bL28 (78 aa).

Over residues 1–20 the composition is skewed to polar residues; the sequence is MSRVCQLTGTRANNGMSVSH. Residues 1 to 23 form a disordered region; sequence MSRVCQLTGTRANNGMSVSHSHI.

This sequence belongs to the bacterial ribosomal protein bL28 family.

The protein is Large ribosomal subunit protein bL28 of Prochlorococcus marinus (strain NATL2A).